The chain runs to 360 residues: Fructose import permease protein FrcC (360 aa).

A run of 9 helical transmembrane segments spans residues 48 to 68 (AAVP…ILGG), 84 to 106 (AIVG…DLSV), 125 to 145 (GFPP…CGYI), 155 to 175 (LPPF…NFLY), 205 to 225 (AVFT…WYVL), 254 to 274 (MLIS…WALI), 284 to 304 (AGQF…ISLF), 310 to 330 (IMGM…LRLM), and 335 to 355 (QWTY…DQWI).

The protein belongs to the binding-protein-dependent transport system permease family. As to quaternary structure, the complex is composed of two ATP-binding proteins (FrcA), two transmembrane proteins (FrcC) and a solute-binding protein (FrcB).

It localises to the cell inner membrane. In terms of biological role, part of the high-affinity ABC transporter complex FrcBCA involved in fructose uptake. Is also a high-affinity transporter for ribose and mannose. Responsible for the translocation of the substrate across the membrane. The polypeptide is Fructose import permease protein FrcC (Rhizobium meliloti (Ensifer meliloti)).